The primary structure comprises 353 residues: UPF0324 membrane protein PP_3661 (353 aa).

The next 8 helical transmembrane spans lie at 20 to 42 (LNGILFVALFAVAVTQLAAMPAI), 70 to 92 (ASWAAGINFSARGLLRIAVAFFG), 105 to 127 (WSGLIVSVLVVTSTLLIGLWCGM), 137 to 159 (ALLTAAGSAICGAAAVLAFESAL), 166 to 188 (SAMAVGSVVLFGTLSMFLYPLAI), 234 to 253 (MTRVMLLVPVLLVVGLWISR), 266 to 288 (IAMPWFAFGFLALVLVNSMQVLP), and 326 to 348 (ALATGAILNLWLVGGGLAITLGV).

It belongs to the UPF0324 family.

It localises to the cell membrane. This chain is UPF0324 membrane protein PP_3661, found in Pseudomonas putida (strain ATCC 47054 / DSM 6125 / CFBP 8728 / NCIMB 11950 / KT2440).